The chain runs to 115 residues: Large ribosomal subunit protein bL19 (115 aa).

This sequence belongs to the bacterial ribosomal protein bL19 family.

In terms of biological role, this protein is located at the 30S-50S ribosomal subunit interface and may play a role in the structure and function of the aminoacyl-tRNA binding site. This Pectobacterium atrosepticum (strain SCRI 1043 / ATCC BAA-672) (Erwinia carotovora subsp. atroseptica) protein is Large ribosomal subunit protein bL19.